We begin with the raw amino-acid sequence, 85 residues long: MATKIRLARAGAKKRPFYQVVVADERSRRDGRFIENMGTYDPTKNPAVFKLNEEKILAWLSKGAQPTDTVRQLLKKAGILDKATA.

This sequence belongs to the bacterial ribosomal protein bS16 family.

In Pelobacter propionicus (strain DSM 2379 / NBRC 103807 / OttBd1), this protein is Small ribosomal subunit protein bS16.